Here is an 85-residue protein sequence, read N- to C-terminus: Large ribosomal subunit protein bL27 (85 aa).

Residues 1–20 are disordered; that stretch reads MAHKKAGGSTRNGRDSESKR.

The protein belongs to the bacterial ribosomal protein bL27 family.

This Azotobacter vinelandii (strain DJ / ATCC BAA-1303) protein is Large ribosomal subunit protein bL27.